The primary structure comprises 560 residues: Membrane protein insertase YidC (560 aa).

6 helical membrane passes run 5–25, 334–354, 357–377, 431–451, 476–496, and 522–542; these read IINL…WQYF, AIDF…MNFF, YVGN…LLMF, LPIL…YVTI, LFGL…WPIL, and FMPL…LIYW.

This sequence belongs to the OXA1/ALB3/YidC family. Type 1 subfamily. Interacts with the Sec translocase complex via SecD. Specifically interacts with transmembrane segments of nascent integral membrane proteins during membrane integration.

The protein localises to the cell inner membrane. Required for the insertion and/or proper folding and/or complex formation of integral membrane proteins into the membrane. Involved in integration of membrane proteins that insert both dependently and independently of the Sec translocase complex, as well as at least some lipoproteins. Aids folding of multispanning membrane proteins. The sequence is that of Membrane protein insertase YidC from Rickettsia massiliae (strain Mtu5).